The following is a 96-amino-acid chain: (4S)-4-hydroxy-5-phosphonooxypentane-2,3-dione isomerase (96 aa).

In terms of domain architecture, ABM spans 2 to 91; that stretch reads HVTLVEINVH…MTGPRTKKVF (90 aa).

It belongs to the LsrG family. As to quaternary structure, homodimer.

The protein resides in the cytoplasm. It carries out the reaction (2S)-2-hydroxy-3,4-dioxopentyl phosphate = 3-hydroxy-2,4-dioxopentyl phosphate. Functionally, involved in the degradation of phospho-AI-2, thereby terminating induction of the lsr operon and closing the AI-2 signaling cycle. Catalyzes the conversion of (4S)-4-hydroxy-5-phosphonooxypentane-2,3-dione (P-DPD) to 3-hydroxy-5-phosphonooxypentane-2,4-dione (P-HPD). The polypeptide is (4S)-4-hydroxy-5-phosphonooxypentane-2,3-dione isomerase (Salmonella typhimurium (strain LT2 / SGSC1412 / ATCC 700720)).